A 339-amino-acid polypeptide reads, in one-letter code: Methionine import ATP-binding protein MetN 2 (339 aa).

One can recognise an ABC transporter domain in the interval 2-241 (ISFNNVSKLY…PKTKTTQNFV (240 aa)). 38 to 45 (GFSGAGKS) contacts ATP.

Belongs to the ABC transporter superfamily. Methionine importer (TC 3.A.1.24) family. As to quaternary structure, the complex is composed of two ATP-binding proteins (MetN), two transmembrane proteins (MetI) and a solute-binding protein (MetQ).

The protein localises to the cell membrane. It catalyses the reaction L-methionine(out) + ATP + H2O = L-methionine(in) + ADP + phosphate + H(+). The catalysed reaction is D-methionine(out) + ATP + H2O = D-methionine(in) + ADP + phosphate + H(+). Part of the ABC transporter complex MetNIQ involved in methionine import. Responsible for energy coupling to the transport system. This chain is Methionine import ATP-binding protein MetN 2, found in Bacillus cereus (strain ATCC 14579 / DSM 31 / CCUG 7414 / JCM 2152 / NBRC 15305 / NCIMB 9373 / NCTC 2599 / NRRL B-3711).